The primary structure comprises 236 residues: 1-(5-phosphoribosyl)-5-[(5-phosphoribosylamino)methylideneamino] imidazole-4-carboxamide isomerase (236 aa).

Residue D8 is the Proton acceptor of the active site. D127 acts as the Proton donor in catalysis.

The protein belongs to the HisA/HisF family.

It localises to the cytoplasm. The catalysed reaction is 1-(5-phospho-beta-D-ribosyl)-5-[(5-phospho-beta-D-ribosylamino)methylideneamino]imidazole-4-carboxamide = 5-[(5-phospho-1-deoxy-D-ribulos-1-ylimino)methylamino]-1-(5-phospho-beta-D-ribosyl)imidazole-4-carboxamide. It functions in the pathway amino-acid biosynthesis; L-histidine biosynthesis; L-histidine from 5-phospho-alpha-D-ribose 1-diphosphate: step 4/9. This is 1-(5-phosphoribosyl)-5-[(5-phosphoribosylamino)methylideneamino] imidazole-4-carboxamide isomerase from Campylobacter concisus (strain 13826).